A 61-amino-acid polypeptide reads, in one-letter code: Small ribosomal subunit protein uS14B (61 aa).

Residues Cys24, Cys27, Cys40, and Cys43 each contribute to the Zn(2+) site.

Belongs to the universal ribosomal protein uS14 family. Zinc-binding uS14 subfamily. In terms of assembly, part of the 30S ribosomal subunit. Contacts proteins S3 and S10. It depends on Zn(2+) as a cofactor.

Functionally, binds 16S rRNA, required for the assembly of 30S particles and may also be responsible for determining the conformation of the 16S rRNA at the A site. The polypeptide is Small ribosomal subunit protein uS14B (Ligilactobacillus salivarius (strain UCC118) (Lactobacillus salivarius)).